The following is a 554-amino-acid chain: MAKVVKFDSEARAAMIRGVDILANTVKVTLGPKGRNVVIDKSYGAPRITKDGVSVAKEIDLEDKFENMGAQMVKEVASKTNEEAGDGTTTATILAQAIVKEGVKYVTAGMNPMDVKRGIDAAVEHVKASLIASAKKVKDTDEIAQVGTISANGDKEIGNMIAKAMQKVGNEGVITVEEAKGVETELDVVEGMQFDRGYLSPYFITNADKMTTELENPFILLHEKKLTNLQPMVPLLEAVVQAGRPLMIISEDVEGEALATLVVNKLRGGLKVVAVKAPGFGDRRKSMLDDIAILTGGQVISEDIGVKLENVKLTDLGSCKRVKVDKDNSTIISGNGKKSEIEARCAQIKQQVGETTSDYDREKLQERLAKLAGGVAVIKVGGATEVEVKERKDRVEDALNATRAAAEEGIVVGGGCALLYASQSLDTLKVKGDDQKAGVALVAKALQAPIRQITLNAGVDGSVVVGKLLEQNKKNMGYDAQNEEYVDMFAKGIIDPVKVVRTALQDAASIAGLLVTTEAMIADKPDDKDSGAGGMSGGMPGGMGGMGGMGGMGM.

Residues Thr-29–Pro-32, Lys-50, Asp-86–Thr-90, Gly-414, and Asp-495 contribute to the ATP site.

This sequence belongs to the chaperonin (HSP60) family. As to quaternary structure, forms a cylinder of 14 subunits composed of two heptameric rings stacked back-to-back. Interacts with the co-chaperonin GroES.

The protein localises to the cytoplasm. The enzyme catalyses ATP + H2O + a folded polypeptide = ADP + phosphate + an unfolded polypeptide.. In terms of biological role, together with its co-chaperonin GroES, plays an essential role in assisting protein folding. The GroEL-GroES system forms a nano-cage that allows encapsulation of the non-native substrate proteins and provides a physical environment optimized to promote and accelerate protein folding. The chain is Chaperonin GroEL from Pelagibacter ubique (strain HTCC1062).